The primary structure comprises 204 residues: Recombination protein RecR (204 aa).

Residues 58-75 form a C4-type zinc finger; that stretch reads CTICQNITDVGTDPCAIC. In terms of domain architecture, Toprim spans 83–181; the sequence is TVICVVESPV…AVTKIARGIP (99 aa).

It belongs to the RecR family.

Functionally, may play a role in DNA repair. It seems to be involved in an RecBC-independent recombinational process of DNA repair. It may act with RecF and RecO. In Chlorobium chlorochromatii (strain CaD3), this protein is Recombination protein RecR.